Here is a 39-residue protein sequence, read N- to C-terminus: U1-ectatotoxin-Et1b subunit A (39 aa).

A disulfide bond links C14 and C35.

It belongs to the ectatomin family. Ectatomin-Et subfamily. In terms of assembly, heterodimer of subunits A and B; disulfide-linked. In terms of tissue distribution, expressed by the venom gland.

Its subcellular location is the secreted. The protein localises to the target cell membrane. This is U1-ectatotoxin-Et1b subunit A from Ectatomma tuberculatum (Selva ant).